We begin with the raw amino-acid sequence, 364 residues long: uncharacterized protein (364 aa).

This is an uncharacterized protein from Escherichia coli (strain K12).